Consider the following 433-residue polypeptide: MMIYSITPPHRLRGIIDLPGDKSISHRAILLNAVAAGSAEITNFLTGADCLSTIACVQALGVHIERQGTTVRVDGAGLRGLREPVDVLDCGNSGTTLRLLAGMIAGQEGMFAVLTGDSSLRSRPQQRIVAPLRALGASLDGRQQGNCAPLAVRGAHLHGGAYELPIASAQVKSALLLAALFGDAPLTLTGRTDGRDHTERMLAAMGVEITVNTPVIRLTPPAHSDALRPLSLRAPGDPSSAAFWWVAAAIHPDAELTTTGVCLNPTRTGALDALRAMGAQIEVTNQRIEGSEPVGDVTVRSSQLRGITIEGALIPRLIDELPVLALAAACAEGETIIRDAQELRVKETDRIATAASGLTALGATVEPTSDGMVISGGARLRGASLDSHGDHRLAMTWAIAGLVASGETTLRGAGAVDVSYPEFWGVLARVAER.

3-phosphoshikimate is bound by residues Lys-22, Ser-23, and Arg-27. Lys-22 contacts phosphoenolpyruvate. Phosphoenolpyruvate-binding residues include Gly-94 and Arg-123. 3-phosphoshikimate is bound by residues Ser-168, Gln-170, Asp-319, and Lys-346. Gln-170 lines the phosphoenolpyruvate pocket. Catalysis depends on Asp-319, which acts as the Proton acceptor. The phosphoenolpyruvate site is built by Arg-350 and Arg-392.

The protein belongs to the EPSP synthase family. In terms of assembly, monomer.

The protein resides in the cytoplasm. The enzyme catalyses 3-phosphoshikimate + phosphoenolpyruvate = 5-O-(1-carboxyvinyl)-3-phosphoshikimate + phosphate. Its pathway is metabolic intermediate biosynthesis; chorismate biosynthesis; chorismate from D-erythrose 4-phosphate and phosphoenolpyruvate: step 6/7. In terms of biological role, catalyzes the transfer of the enolpyruvyl moiety of phosphoenolpyruvate (PEP) to the 5-hydroxyl of shikimate-3-phosphate (S3P) to produce enolpyruvyl shikimate-3-phosphate and inorganic phosphate. This is 3-phosphoshikimate 1-carboxyvinyltransferase from Roseiflexus sp. (strain RS-1).